Here is a 408-residue protein sequence, read N- to C-terminus: Histidine--tRNA ligase (408 aa).

Belongs to the class-II aminoacyl-tRNA synthetase family.

Its subcellular location is the cytoplasm. It carries out the reaction tRNA(His) + L-histidine + ATP = L-histidyl-tRNA(His) + AMP + diphosphate + H(+). The chain is Histidine--tRNA ligase from Methanospirillum hungatei JF-1 (strain ATCC 27890 / DSM 864 / NBRC 100397 / JF-1).